Reading from the N-terminus, the 177-residue chain is CDP-diacylglycerol--serine O-phosphatidyltransferase (177 aa).

5 helical membrane-spanning segments follow: residues 4–24 (IPCM…HSLL), 28–48 (IHSA…DGMA), 77–97 (MLAY…CALT), 116–136 (LPTF…ILSF), and 140–160 (PILL…KIKF).

This sequence belongs to the CDP-alcohol phosphatidyltransferase class-I family.

Its subcellular location is the cell membrane. The enzyme catalyses a CDP-1,2-diacyl-sn-glycerol + L-serine = a 1,2-diacyl-sn-glycero-3-phospho-L-serine + CMP + H(+). The sequence is that of CDP-diacylglycerol--serine O-phosphatidyltransferase (pssA) from Bacillus subtilis (strain 168).